The following is a 372-amino-acid chain: tRNA-specific 2-thiouridylase MnmA (372 aa).

ATP is bound by residues 9–16 (GMSGGVDS) and Met-35. The segment at 95-97 (NPD) is interaction with target base in tRNA. The active-site Nucleophile is Cys-100. The cysteines at positions 100 and 201 are disulfide-linked. Gly-124 lines the ATP pocket. The interaction with tRNA stretch occupies residues 151 to 153 (KDQ). Cys-201 serves as the catalytic Cysteine persulfide intermediate. The tract at residues 317–318 (RY) is interaction with tRNA.

Belongs to the MnmA/TRMU family.

It localises to the cytoplasm. It carries out the reaction S-sulfanyl-L-cysteinyl-[protein] + uridine(34) in tRNA + AH2 + ATP = 2-thiouridine(34) in tRNA + L-cysteinyl-[protein] + A + AMP + diphosphate + H(+). Catalyzes the 2-thiolation of uridine at the wobble position (U34) of tRNA, leading to the formation of s(2)U34. The protein is tRNA-specific 2-thiouridylase MnmA of Janthinobacterium sp. (strain Marseille) (Minibacterium massiliensis).